Consider the following 368-residue polypeptide: UPF0284 protein Tery_1555 (368 aa).

The protein belongs to the UPF0284 family.

This is UPF0284 protein Tery_1555 from Trichodesmium erythraeum (strain IMS101).